A 534-amino-acid polypeptide reads, in one-letter code: Cytokinin dehydrogenase 1 (534 aa).

An N-terminal signal peptide occupies residues 1-18 (MAVVYYLLLAGLIACSHA). N-linked (GlcNAc...) asparagine glycans are attached at residues Asn-52, Asn-63, and Asn-89. One can recognise an FAD-binding PCMH-type domain in the interval 65 to 245 (TSALPAAVLY…TRARIAVEPA (181 aa)). 4 residues coordinate FAD: Phe-100, Gly-102, Arg-103, and Gly-104. His-105 carries the pros-8alpha-FAD histidine modification. The FAD site is built by Ser-106 and Gln-110. N-linked (GlcNAc...) asparagine glycosylation occurs at Asn-134. Positions 169, 174, 180, 184, and 235 each coordinate FAD. Residue Asp-169 participates in N(6)-dimethylallyladenine binding. Asp-169 lines the trans-zeatin pocket. 3 N-linked (GlcNAc...) asparagine glycosylation sites follow: Asn-294, Asn-323, and Asn-338. A N(6)-dimethylallyladenine-binding site is contributed by Glu-381. Glu-381 is a binding site for trans-zeatin. Asn-434 carries N-linked (GlcNAc...) asparagine glycosylation. Trans-zeatin is bound at residue Ser-456. FAD-binding residues include Tyr-491, Ser-527, and Gln-530.

This sequence belongs to the oxygen-dependent FAD-linked oxidoreductase family. As to quaternary structure, monomer. The cofactor is FAD. Glycosylated; with approximately 10 hexose residues per site. Expressed in immature kernels and unpollinated cobs. Weakly expressed in kernels harvested two weeks after anthesis.

The protein resides in the secreted. Its subcellular location is the extracellular space. The catalysed reaction is N(6)-dimethylallyladenine + A + H2O = 3-methyl-2-butenal + adenine + AH2. Its activity is regulated as follows. Competitive inhibition by phenylureas. Its function is as follows. Catalyzes the oxidation of cytokinins, a family of N(6)-substituted adenine derivatives that are plant hormones, where the substituent is an isopentenyl group. Cleaves trans-zeatin, N(6)-dimethylallyladenine (isopentenyladenine), isopentenyladenosine, zeatin riboside and cis-zeatin, but not dihydrozeatin, kinetin and benzylaminopurine. This chain is Cytokinin dehydrogenase 1 (CKX1), found in Zea mays (Maize).